The following is a 239-amino-acid chain: Ribosomal RNA small subunit methyltransferase G (239 aa).

Residues G77, F82, 128 to 129, and R147 each bind S-adenosyl-L-methionine; that span reads AE.

Belongs to the methyltransferase superfamily. RNA methyltransferase RsmG family.

It localises to the cytoplasm. In terms of biological role, specifically methylates the N7 position of guanine in position 535 of 16S rRNA. The sequence is that of Ribosomal RNA small subunit methyltransferase G from Bacillus anthracis (strain A0248).